The sequence spans 716 residues: Fatty acid oxidation complex subunit alpha (716 aa).

Residues 1 to 189 (MIYQSPTIQV…KVGAVDAVVA (189 aa)) are enoyl-CoA hydratase/isomerase. Aspartate 296 is a binding site for substrate. Positions 311–716 (KAVNSAAVLG…AANNGSYYQA (406 aa)) are 3-hydroxyacyl-CoA dehydrogenase. Residues methionine 324, aspartate 343, 400-402 (VVE), lysine 407, and serine 429 each bind NAD(+). Catalysis depends on histidine 450, which acts as the For 3-hydroxyacyl-CoA dehydrogenase activity. Residue asparagine 453 participates in NAD(+) binding. The substrate site is built by asparagine 500 and tyrosine 660.

This sequence in the N-terminal section; belongs to the enoyl-CoA hydratase/isomerase family. In the C-terminal section; belongs to the 3-hydroxyacyl-CoA dehydrogenase family. In terms of assembly, heterotetramer of two alpha chains (FadB) and two beta chains (FadA).

It carries out the reaction a (3S)-3-hydroxyacyl-CoA + NAD(+) = a 3-oxoacyl-CoA + NADH + H(+). It catalyses the reaction a (3S)-3-hydroxyacyl-CoA = a (2E)-enoyl-CoA + H2O. The enzyme catalyses a 4-saturated-(3S)-3-hydroxyacyl-CoA = a (3E)-enoyl-CoA + H2O. The catalysed reaction is (3S)-3-hydroxybutanoyl-CoA = (3R)-3-hydroxybutanoyl-CoA. It carries out the reaction a (3Z)-enoyl-CoA = a 4-saturated (2E)-enoyl-CoA. It catalyses the reaction a (3E)-enoyl-CoA = a 4-saturated (2E)-enoyl-CoA. It functions in the pathway lipid metabolism; fatty acid beta-oxidation. Involved in the aerobic and anaerobic degradation of long-chain fatty acids via beta-oxidation cycle. Catalyzes the formation of 3-oxoacyl-CoA from enoyl-CoA via L-3-hydroxyacyl-CoA. It can also use D-3-hydroxyacyl-CoA and cis-3-enoyl-CoA as substrate. This chain is Fatty acid oxidation complex subunit alpha, found in Shewanella oneidensis (strain ATCC 700550 / JCM 31522 / CIP 106686 / LMG 19005 / NCIMB 14063 / MR-1).